Here is a 733-residue protein sequence, read N- to C-terminus: LMBR1 domain-containing protein 2 homolog A (733 aa).

5 helical membrane-spanning segments follow: residues 1-21 (MIVI…KILH), 33-53 (VYIS…LVPI), 125-145 (FYFG…SFVL), 163-183 (AYLY…LLAV), and 191-211 (MVGF…IILM). Positions 232–266 (LKHLQFKAVELLNSKKKANEELIATMKVIRRIQEK) form a coiled coil. 4 helical membrane passes run 386–406 (AAIV…ALAF), 423–443 (VSNI…ALTC), 468–488 (SIIF…YNFI), and 513–533 (VAPF…VIVC). Disordered regions lie at residues 581-641 (NNIK…TSSA), 649-668 (LKKS…PYEQ), and 674-696 (ESND…TYNA). Polar residues predominate over residues 596–619 (DSTSNNPKQIFKSGSTTISKQSPP). Composition is skewed to low complexity over residues 620–640 (NLNV…NTSS) and 654–664 (NNNNNNNNNNN). Over residues 674–685 (ESNDFDDDDDIE) the composition is skewed to acidic residues.

It belongs to the LIMR family.

Its subcellular location is the membrane. This Dictyostelium discoideum (Social amoeba) protein is LMBR1 domain-containing protein 2 homolog A.